Reading from the N-terminus, the 86-residue chain is ATP synthase subunit c (86 aa).

The next 2 helical transmembrane spans lie at 13 to 33 and 63 to 83; these read FFATGLAYLGAGISILAAGLA and ILGQAMVETSGIYALIIAFIL.

The protein belongs to the ATPase C chain family. As to quaternary structure, F-type ATPases have 2 components, F(1) - the catalytic core - and F(0) - the membrane proton channel. F(1) has five subunits: alpha(3), beta(3), gamma(1), delta(1), epsilon(1). F(0) has three main subunits: a(1), b(2) and c(10-14). The alpha and beta chains form an alternating ring which encloses part of the gamma chain. F(1) is attached to F(0) by a central stalk formed by the gamma and epsilon chains, while a peripheral stalk is formed by the delta and b chains.

The protein localises to the cell membrane. Its function is as follows. F(1)F(0) ATP synthase produces ATP from ADP in the presence of a proton or sodium gradient. F-type ATPases consist of two structural domains, F(1) containing the extramembraneous catalytic core and F(0) containing the membrane proton channel, linked together by a central stalk and a peripheral stalk. During catalysis, ATP synthesis in the catalytic domain of F(1) is coupled via a rotary mechanism of the central stalk subunits to proton translocation. In terms of biological role, key component of the F(0) channel; it plays a direct role in translocation across the membrane. A homomeric c-ring of between 10-14 subunits forms the central stalk rotor element with the F(1) delta and epsilon subunits. The polypeptide is ATP synthase subunit c (Acholeplasma laidlawii (strain PG-8A)).